Here is a 199-residue protein sequence, read N- to C-terminus: Oleosin 21.2 kDa (199 aa).

A compositionally biased stretch (basic and acidic residues) spans 1–14 (MADTHRVDRTDRHF). Positions 1–31 (MADTHRVDRTDRHFQFQSPYEGGRGQGQYEG) are disordered. A2 carries the post-translational modification N-acetylalanine. Positions 2–56 (ADTHRVDRTDRHFQFQSPYEGGRGQGQYEGDRGYGGGGYKSMMPESGPSSTQVLS) are polar. The segment covering 22-31 (GGRGQGQYEG) has biased composition (gly residues). 3 helical membrane-spanning segments follow: residues 51–71 (STQVLSLLIGVPVVGSLLALA), 72–92 (GLLLAGSVIGLMVALPLFLLF), and 96–116 (IVPAALTIGLAMTGFLASGMF). The segment at 57-128 (LLIGVPVVGS…TGLSSISWVM (72 aa)) is hydrophobic. The segment at 159–199 (KGKEMGQHVQNKAQDVKQYDISKPHDTTTKGHETQGRTTAA) is disordered. Residues 172–193 (QDVKQYDISKPHDTTTKGHETQ) show a composition bias toward basic and acidic residues.

It belongs to the oleosin family.

It is found in the lipid droplet. It localises to the membrane. Functionally, may have a structural role to stabilize the lipid body during desiccation of the seed by preventing coalescence of the oil. Probably interacts with both lipid and phospholipid moieties of lipid bodies. May also provide recognition signals for specific lipase anchorage in lipolysis during seedling growth. This chain is Oleosin 21.2 kDa, found in Arabidopsis thaliana (Mouse-ear cress).